The primary structure comprises 375 residues: Putative actin-26 (375 aa).

Belongs to the actin family.

The protein localises to the cytoplasm. It is found in the cytoskeleton. The enzyme catalyses ATP + H2O = ADP + phosphate + H(+). Its function is as follows. Actins are highly conserved proteins that are involved in various types of cell motility and are ubiquitously expressed in all eukaryotic cells. Multiple isoforms are involved in various cellular functions such as cytoskeleton structure, cell mobility, chromosome movement and muscle contraction. This is Putative actin-26 (act26) from Dictyostelium discoideum (Social amoeba).